A 433-amino-acid chain; its full sequence is Histidine--tRNA ligase (433 aa).

This sequence belongs to the class-II aminoacyl-tRNA synthetase family. In terms of assembly, homodimer.

The protein resides in the cytoplasm. It catalyses the reaction tRNA(His) + L-histidine + ATP = L-histidyl-tRNA(His) + AMP + diphosphate + H(+). In Blochmanniella floridana, this protein is Histidine--tRNA ligase.